The chain runs to 77 residues: Acyl carrier protein (77 aa).

One can recognise a Carrier domain in the interval 2-77; it reads SSIDKRIKEI…DAIDYITDHT (76 aa). Ser37 carries the O-(pantetheine 4'-phosphoryl)serine modification.

It belongs to the acyl carrier protein (ACP) family. In terms of processing, 4'-phosphopantetheine is transferred from CoA to a specific serine of apo-ACP by AcpS. This modification is essential for activity because fatty acids are bound in thioester linkage to the sulfhydryl of the prosthetic group.

The protein resides in the cytoplasm. The protein operates within lipid metabolism; fatty acid biosynthesis. Its function is as follows. Carrier of the growing fatty acid chain in fatty acid biosynthesis. The polypeptide is Acyl carrier protein (Geotalea uraniireducens (strain Rf4) (Geobacter uraniireducens)).